Here is a 303-residue protein sequence, read N- to C-terminus: Mycothiol acetyltransferase (303 aa).

N-acetyltransferase domains follow at residues 6 to 134 (TSLA…VEGD) and 154 to 303 (NEAY…QSSS). Glu37 contacts 1D-myo-inositol 2-(L-cysteinylamino)-2-deoxy-alpha-D-glucopyranoside. Acetyl-CoA is bound by residues 75 to 77 (VVV) and 83 to 88 (RQGYGS). Glu180, Lys221, and Glu233 together coordinate 1D-myo-inositol 2-(L-cysteinylamino)-2-deoxy-alpha-D-glucopyranoside. Residues 237–239 (VGL) and 244–250 (RRRGLGD) contribute to the acetyl-CoA site. Residue Tyr271 coordinates 1D-myo-inositol 2-(L-cysteinylamino)-2-deoxy-alpha-D-glucopyranoside. 276 to 281 (NESARR) lines the acetyl-CoA pocket.

Belongs to the acetyltransferase family. MshD subfamily. As to quaternary structure, monomer.

It carries out the reaction 1D-myo-inositol 2-(L-cysteinylamino)-2-deoxy-alpha-D-glucopyranoside + acetyl-CoA = mycothiol + CoA + H(+). Catalyzes the transfer of acetyl from acetyl-CoA to desacetylmycothiol (Cys-GlcN-Ins) to form mycothiol. This chain is Mycothiol acetyltransferase, found in Corynebacterium diphtheriae (strain ATCC 700971 / NCTC 13129 / Biotype gravis).